A 531-amino-acid polypeptide reads, in one-letter code: MTTKPEKIIIFDTTLRDGEQCPGATLNIDEKLAIAKQLARLGVDIIEAGFAFASPGDFEAVHKIAQTVGTQSGPVICSLARARHDDIKAAAEAIKPAAKGRIHTFIATSDIHLQYKLKKTRPEVIAIAEEMVAYAKSFTDDVEFSPEDAGRSDPEFLYQVLERAIAAGATTINIPDTVGYTTPSEFGAIIKGIKENVPNIDQAIISVHGHNDLGLAVANFLEAVKNGARQLECTINGIGERAGNAALEELVMAMHVRRQYFNPFLGRHPDSEEALTNIDTKQIYKTSRLVSNLTGMLVQPNKAIVGANAFAHESGIHQDGVLKNKLTYEIMDAQLIGLTDNQIVLGKHSGRNAFRTRLKELGFELSETELNKAFVKFKEVADKKKEISDWDLEAIVNDEIQQAPDLFRVELVQVSCGSNARPTATVTLRTPDGEELTDAAIGTGPVDAVYKAINRVVNVPNQLIEFSVQSVTAGIDAIGEVTIRLRYESRVFSGHAANTDIIVASAQAYVNALNRLYASLQTQDKQTEVTA.

Residues 8 to 284 enclose the Pyruvate carboxyltransferase domain; sequence IIIFDTTLRD…LTNIDTKQIY (277 aa). 4 residues coordinate Mn(2+): Asp17, His208, His210, and Asn244. Residues 408-531 form a regulatory domain region; sequence RVELVQVSCG…TQDKQTEVTA (124 aa).

It belongs to the alpha-IPM synthase/homocitrate synthase family. LeuA type 1 subfamily. In terms of assembly, homodimer. It depends on Mn(2+) as a cofactor.

The protein localises to the cytoplasm. It carries out the reaction 3-methyl-2-oxobutanoate + acetyl-CoA + H2O = (2S)-2-isopropylmalate + CoA + H(+). It functions in the pathway amino-acid biosynthesis; L-leucine biosynthesis; L-leucine from 3-methyl-2-oxobutanoate: step 1/4. Its function is as follows. Catalyzes the condensation of the acetyl group of acetyl-CoA with 3-methyl-2-oxobutanoate (2-ketoisovalerate) to form 3-carboxy-3-hydroxy-4-methylpentanoate (2-isopropylmalate). The sequence is that of 2-isopropylmalate synthase from Nostoc sp. (strain PCC 7120 / SAG 25.82 / UTEX 2576).